A 137-amino-acid chain; its full sequence is Large ribosomal subunit protein eL28 (137 aa).

S2 is modified (N-acetylserine). Glycyl lysine isopeptide (Lys-Gly) (interchain with G-Cter in SUMO2) cross-links involve residues K58 and K65. Position 115 is a phosphoserine (S115).

It belongs to the eukaryotic ribosomal protein eL28 family. As to quaternary structure, component of the large ribosomal subunit.

The protein localises to the cytoplasm. In terms of biological role, component of the large ribosomal subunit. The ribosome is a large ribonucleoprotein complex responsible for the synthesis of proteins in the cell. This Mus musculus (Mouse) protein is Large ribosomal subunit protein eL28 (Rpl28).